A 700-amino-acid polypeptide reads, in one-letter code: Elongation factor G 1 (700 aa).

Residues 8–290 (ERYRNIGISA…AVIDYLPSPA (283 aa)) form the tr-type G domain. Residues 17–24 (AHIDAGKT), 88–92 (DTPGH), and 142–145 (NKMD) contribute to the GTP site.

Belongs to the TRAFAC class translation factor GTPase superfamily. Classic translation factor GTPase family. EF-G/EF-2 subfamily.

Its subcellular location is the cytoplasm. Its function is as follows. Catalyzes the GTP-dependent ribosomal translocation step during translation elongation. During this step, the ribosome changes from the pre-translocational (PRE) to the post-translocational (POST) state as the newly formed A-site-bound peptidyl-tRNA and P-site-bound deacylated tRNA move to the P and E sites, respectively. Catalyzes the coordinated movement of the two tRNA molecules, the mRNA and conformational changes in the ribosome. In Bordetella parapertussis (strain 12822 / ATCC BAA-587 / NCTC 13253), this protein is Elongation factor G 1.